The sequence spans 275 residues: Hemin import ATP-binding protein HmuV (275 aa).

Positions 2–242 (LKAAGIGVRL…EWIETGFGLQ (241 aa)) constitute an ABC transporter domain. 34-41 (GPNGAGKS) contributes to the ATP binding site.

This sequence belongs to the ABC transporter superfamily. Heme (hemin) importer (TC 3.A.1.14.5) family. As to quaternary structure, the complex is composed of two ATP-binding proteins (HmuV), two transmembrane proteins (HmuU) and a solute-binding protein (HmuT).

It localises to the cell inner membrane. Part of the ABC transporter complex HmuTUV involved in hemin import. Responsible for energy coupling to the transport system. This is Hemin import ATP-binding protein HmuV from Gloeobacter violaceus (strain ATCC 29082 / PCC 7421).